The chain runs to 491 residues: Peptidyl-prolyl isomerase CWC27 (491 aa).

A PPIase cyclophilin-type domain is found at 11–167 (TNGKVIIDTT…IPPKIRRIHI (157 aa)). 3 stretches are compositionally biased toward basic and acidic residues: residues 186 to 202 (AQQK…EQRE), 268 to 298 (DLGK…REKA), and 306 to 316 (AEIKRMEEDLR). Disordered stretches follow at residues 186 to 427 (AQQK…IEVD) and 464 to 491 (RDLL…GRNR). Residues 277-327 (ASEEKKAVDLKNIRAQHEREKAGGSAARQAEIKRMEEDLRRLKKRSGSVSD) adopt a coiled-coil conformation. A compositionally biased stretch (low complexity) spans 323–333 (GSVSDSESDSS). Basic residues predominate over residues 352–367 (ASKRGRAAMKAGNKRG). 2 stretches are compositionally biased toward acidic residues: residues 391-406 (DEPE…EGEA) and 418-427 (AEEEGGIEVD). A compositionally biased stretch (basic residues) spans 482–491 (RTVRNSGRNR).

Belongs to the cyclophilin-type PPIase family. CWC27 subfamily. As to quaternary structure, associated with the spliceosome.

The protein localises to the cytoplasm. Its subcellular location is the nucleus. It catalyses the reaction [protein]-peptidylproline (omega=180) = [protein]-peptidylproline (omega=0). Its function is as follows. PPIases accelerate the folding of proteins. It catalyzes the cis-trans isomerization of proline imidic peptide bonds in oligopeptides. Involved in pre-mRNA splicing. The polypeptide is Peptidyl-prolyl isomerase CWC27 (CWC27) (Cryptococcus neoformans var. neoformans serotype D (strain B-3501A) (Filobasidiella neoformans)).